The primary structure comprises 465 residues: Calcitonin gene-related peptide type 1 receptor (465 aa).

The N-terminal stretch at 1-17 is a signal peptide; it reads MVICLLLCTPTDIFVVA. Residues 18 to 141 lie on the Extracellular side of the membrane; the sequence is SPEVNETQEY…HTNEGRMTAM (124 aa). N-linked (GlcNAc...) asparagine glycosylation is found at Asn22, Asn68, Asn120, and Asn125. Disulfide bonds link Cys50-Cys76, Cys67-Cys107, and Cys90-Cys129. The chain crosses the membrane as a helical span at residues 142 to 166; the sequence is NLFYLALIGHGLSLTSLLISLGIFF. The Cytoplasmic portion of the chain corresponds to 167–177; the sequence is YFKSLSCQRIT. Residues 178–200 traverse the membrane as a helical segment; sequence LHKNLFFSFVLNSVITIIWLTAV. The Extracellular portion of the chain corresponds to 201 to 211; that stretch reads ANNQELVQRNP. The chain crosses the membrane as a helical span at residues 212–240; sequence TSCKVSQFIHLYLFGCNYFWMLCEGIYLH. The Cytoplasmic segment spans residues 241 to 254; that stretch reads TLIVVAVFAEKQHL. Residues 255 to 275 traverse the membrane as a helical segment; the sequence is MWYYLLGWGFPLIPASIHAIA. Residues 276–291 lie on the Extracellular side of the membrane; it reads RSYYYNDNCWISSNTS. Asn289 is a glycosylation site (N-linked (GlcNAc...) asparagine). A helical membrane pass occupies residues 292–316; it reads LLYIIHGPICAALLVNLFFLLNIVR. Over 317–331 the chain is Cytoplasmic; that stretch reads VLITKLKVTHQAESS. Residues 332–353 traverse the membrane as a helical segment; it reads LYMKAVRATLILVPLLGIQYVL. Residues 354-368 are Extracellular-facing; it reads LPYKPEGRVSSEIYD. A helical membrane pass occupies residues 369–389; that stretch reads YIMHILMHYQGLLVATIFCFF. At 390–465 the chain is on the cytoplasmic side; it reads NGEVQGVLRR…SILKSENPFT (76 aa).

The protein belongs to the G-protein coupled receptor 2 family.

The protein localises to the cell membrane. May function as G protein-coupled receptor for calcitonin-gene-related peptides and adrenomedullin. Specificity may be modulated by accessory proteins. May activate cAMP-dependent pathway. In Oncorhynchus gorbuscha (Pink salmon), this protein is Calcitonin gene-related peptide type 1 receptor (calcrl).